Here is a 191-residue protein sequence, read N- to C-terminus: Programmed cell death protein 6 (191 aa).

The residue at position 2 (Ala-2) is an N-acetylalanine. EF-hand domains are found at residues Pro-23 to Thr-58, Pro-59 to Trp-89, Lys-90 to Arg-125, Leu-126 to Leu-161, and Thr-162 to Val-191. Ca(2+) is bound by residues Asp-36, Asp-38, Ser-40, Val-42, and Glu-47. The Ca(2+) site is built by Asp-103, Asp-105, Ser-107, Met-109, and Glu-114. Mg(2+) is bound by residues Asp-169, Asp-171, Asp-173, and Trp-175.

As to quaternary structure, homodimer and heterodimer; heterodimerizes (via the EF-hand 5) with PEF1. Isoform 1 and isoform 2 self-associate; probably forming homodimers. Interacts with CPNE4 (via VWFA domain). Interacts with PDCD6IP; the interaction is calcium-dependent. Interacts with RBM22. Interacts with PLSCR4. Interacts with ANXA7 and TSG101. Interacts with DAPK1. Interacts with SEC31A; the interaction is calcium-dependent and promotes monoubiquitination of SEC31A. Interacts with ANXA11 (via N-terminus); the interaction is calcium-dependent. Interacts with PLSCR3 (via N-terminus); the interaction is calcium-dependent. Interacts with MCOLN1; the interaction is calcium-dependent. Interacts with KDR; the interaction is calcium-dependent. Interacts with HEBP2; the interaction is calcium-dependent. Interacts with TFG. Isoform 1: Interacts with SHISA5, leading to stabilize it. Isoform 2: Does not interact with SHISA5. Isoform 2: Does not interact with PDCD6IP, TSG101, ANXA7 and ANXA11.

It is found in the endoplasmic reticulum membrane. The protein resides in the cytoplasmic vesicle. It localises to the COPII-coated vesicle membrane. The protein localises to the cytoplasm. Its subcellular location is the nucleus. It is found in the endosome. Functionally, calcium sensor that plays a key role in processes such as endoplasmic reticulum (ER)-Golgi vesicular transport, endosomal biogenesis or membrane repair. Acts as an adapter that bridges unrelated proteins or stabilizes weak protein-protein complexes in response to calcium: calcium-binding triggers exposure of apolar surface, promoting interaction with different sets of proteins thanks to 3 different hydrophobic pockets, leading to translocation to membranes. Involved in ER-Golgi transport. Regulates ER-Golgi transport by promoting the association between PDCD6IP and TSG101, thereby bridging together the ESCRT-III and ESCRT-I complexes. Together with PEF1, acts as a calcium-dependent adapter for the BCR(KLHL12) complex, a complex involved in ER-Golgi transport by regulating the size of COPII coats. In response to cytosolic calcium increase, the heterodimer formed with PEF1 interacts with, and bridges together the BCR(KLHL12) complex and SEC31 (SEC31A or SEC31B), promoting monoubiquitination of SEC31 and subsequent collagen export, which is required for neural crest specification. Involved in the regulation of the distribution and function of MCOLN1 in the endosomal pathway. Promotes localization and polymerization of TFG at endoplasmic reticulum exit site. Required for T-cell receptor-, Fas-, and glucocorticoid-induced apoptosis. May mediate Ca(2+)-regulated signals along the death pathway: interaction with DAPK1 can accelerate apoptotic cell death by increasing caspase-3 activity. Its role in apoptosis may however be indirect, as suggested by knockout experiments. May inhibit KDR/VEGFR2-dependent angiogenesis; the function involves inhibition of VEGF-induced phosphorylation of the Akt signaling pathway. Has a lower Ca(2+) affinity than isoform 1. This Rattus norvegicus (Rat) protein is Programmed cell death protein 6.